Reading from the N-terminus, the 397-residue chain is Stearoyl-[acyl-carrier-protein] 9-desaturase, chloroplastic (397 aa).

Residues 1–33 constitute a chloroplast transit peptide; it reads MALNFNAIASKSQKLPCFALPPKATLRSPKFSM. Fe cation contacts are provided by Glu138, Glu176, His179, Glu229, Glu262, and His265.

It belongs to the fatty acid desaturase type 2 family. In terms of assembly, homodimer. Fe(2+) serves as cofactor.

It is found in the plastid. The protein resides in the chloroplast. It carries out the reaction octadecanoyl-[ACP] + 2 reduced [2Fe-2S]-[ferredoxin] + O2 + 2 H(+) = (9Z)-octadecenoyl-[ACP] + 2 oxidized [2Fe-2S]-[ferredoxin] + 2 H2O. The protein operates within lipid metabolism; fatty acid metabolism. Its function is as follows. Converts stearoyl-ACP to oleoyl-ACP by introduction of a cis double bond between carbons 9 and 10 of the acyl chain. The chain is Stearoyl-[acyl-carrier-protein] 9-desaturase, chloroplastic from Gossypium hirsutum (Upland cotton).